The chain runs to 329 residues: Fructose-1,6-bisphosphatase class 1 (329 aa).

Residues Glu-84, Asp-103, Leu-105, and Asp-106 each coordinate Mg(2+). Residues 106–109 (DGSS), Asn-196, and Lys-262 each bind substrate. Residue Glu-268 participates in Mg(2+) binding.

It belongs to the FBPase class 1 family. In terms of assembly, homotetramer. Requires Mg(2+) as cofactor.

Its subcellular location is the cytoplasm. The catalysed reaction is beta-D-fructose 1,6-bisphosphate + H2O = beta-D-fructose 6-phosphate + phosphate. It participates in carbohydrate biosynthesis; gluconeogenesis. This is Fructose-1,6-bisphosphatase class 1 from Shewanella sediminis (strain HAW-EB3).